Here is a 232-residue protein sequence, read N- to C-terminus: Large ribosomal subunit protein uL1 (232 aa).

Belongs to the universal ribosomal protein uL1 family. Part of the 50S ribosomal subunit.

Functionally, binds directly to 23S rRNA. The L1 stalk is quite mobile in the ribosome, and is involved in E site tRNA release. Its function is as follows. Protein L1 is also a translational repressor protein, it controls the translation of the L11 operon by binding to its mRNA. The polypeptide is Large ribosomal subunit protein uL1 (Amoebophilus asiaticus (strain 5a2)).